The chain runs to 199 residues: Cytochrome c oxidase subunit 2 (199 aa).

Residues 1-13 (AICSLVLYLLTLM) traverse the membrane as a helical segment. Over 14–26 (LMEKLSSNSVDAQ) the chain is Mitochondrial matrix. Residues 27 to 54 (EVELVWTILPAIVLILLALPSLQILYMM) traverse the membrane as a helical segment. The Mitochondrial intermembrane segment spans residues 55–199 (DEIDEPDLTL…SSLLSTSSSL (145 aa)). The Cu cation site is built by His-128, Cys-163, Glu-165, Cys-167, His-171, and Met-174. Glu-165 contributes to the Mg(2+) binding site.

Belongs to the cytochrome c oxidase subunit 2 family. As to quaternary structure, component of the cytochrome c oxidase (complex IV, CIV), a multisubunit enzyme composed of 14 subunits. The complex is composed of a catalytic core of 3 subunits MT-CO1, MT-CO2 and MT-CO3, encoded in the mitochondrial DNA, and 11 supernumerary subunits COX4I, COX5A, COX5B, COX6A, COX6B, COX6C, COX7A, COX7B, COX7C, COX8 and NDUFA4, which are encoded in the nuclear genome. The complex exists as a monomer or a dimer and forms supercomplexes (SCs) in the inner mitochondrial membrane with NADH-ubiquinone oxidoreductase (complex I, CI) and ubiquinol-cytochrome c oxidoreductase (cytochrome b-c1 complex, complex III, CIII), resulting in different assemblies (supercomplex SCI(1)III(2)IV(1) and megacomplex MCI(2)III(2)IV(2)). Found in a complex with TMEM177, COA6, COX18, COX20, SCO1 and SCO2. Interacts with TMEM177 in a COX20-dependent manner. Interacts with COX20. Interacts with COX16. It depends on Cu cation as a cofactor.

Its subcellular location is the mitochondrion inner membrane. The enzyme catalyses 4 Fe(II)-[cytochrome c] + O2 + 8 H(+)(in) = 4 Fe(III)-[cytochrome c] + 2 H2O + 4 H(+)(out). Functionally, component of the cytochrome c oxidase, the last enzyme in the mitochondrial electron transport chain which drives oxidative phosphorylation. The respiratory chain contains 3 multisubunit complexes succinate dehydrogenase (complex II, CII), ubiquinol-cytochrome c oxidoreductase (cytochrome b-c1 complex, complex III, CIII) and cytochrome c oxidase (complex IV, CIV), that cooperate to transfer electrons derived from NADH and succinate to molecular oxygen, creating an electrochemical gradient over the inner membrane that drives transmembrane transport and the ATP synthase. Cytochrome c oxidase is the component of the respiratory chain that catalyzes the reduction of oxygen to water. Electrons originating from reduced cytochrome c in the intermembrane space (IMS) are transferred via the dinuclear copper A center (CU(A)) of subunit 2 and heme A of subunit 1 to the active site in subunit 1, a binuclear center (BNC) formed by heme A3 and copper B (CU(B)). The BNC reduces molecular oxygen to 2 water molecules using 4 electrons from cytochrome c in the IMS and 4 protons from the mitochondrial matrix. The chain is Cytochrome c oxidase subunit 2 (MT-CO2) from Apteryx australis (Southern brown kiwi).